The chain runs to 322 residues: Replication factor C small subunit (322 aa).

Position 46–53 (46–53) interacts with ATP; sequence GSAGVGKT.

It belongs to the activator 1 small subunits family. RfcS subfamily. In terms of assembly, heteromultimer composed of small subunits (RfcS) and large subunits (RfcL).

Its function is as follows. Part of the RFC clamp loader complex which loads the PCNA sliding clamp onto DNA. The polypeptide is Replication factor C small subunit (Methanoregula boonei (strain DSM 21154 / JCM 14090 / 6A8)).